The chain runs to 283 residues: Phosphatidylserine decarboxylase proenzyme (283 aa).

Catalysis depends on charge relay system; for autoendoproteolytic cleavage activity residues D96, H152, and S250. Catalysis depends on S250, which acts as the Schiff-base intermediate with substrate; via pyruvic acid; for decarboxylase activity. S250 is subject to Pyruvic acid (Ser); by autocatalysis.

It belongs to the phosphatidylserine decarboxylase family. PSD-B subfamily. Prokaryotic type I sub-subfamily. As to quaternary structure, heterodimer of a large membrane-associated beta subunit and a small pyruvoyl-containing alpha subunit. Pyruvate is required as a cofactor. In terms of processing, is synthesized initially as an inactive proenzyme. Formation of the active enzyme involves a self-maturation process in which the active site pyruvoyl group is generated from an internal serine residue via an autocatalytic post-translational modification. Two non-identical subunits are generated from the proenzyme in this reaction, and the pyruvate is formed at the N-terminus of the alpha chain, which is derived from the carboxyl end of the proenzyme. The autoendoproteolytic cleavage occurs by a canonical serine protease mechanism, in which the side chain hydroxyl group of the serine supplies its oxygen atom to form the C-terminus of the beta chain, while the remainder of the serine residue undergoes an oxidative deamination to produce ammonia and the pyruvoyl prosthetic group on the alpha chain. During this reaction, the Ser that is part of the protease active site of the proenzyme becomes the pyruvoyl prosthetic group, which constitutes an essential element of the active site of the mature decarboxylase.

It is found in the cell membrane. It carries out the reaction a 1,2-diacyl-sn-glycero-3-phospho-L-serine + H(+) = a 1,2-diacyl-sn-glycero-3-phosphoethanolamine + CO2. It participates in phospholipid metabolism; phosphatidylethanolamine biosynthesis; phosphatidylethanolamine from CDP-diacylglycerol: step 2/2. Functionally, catalyzes the formation of phosphatidylethanolamine (PtdEtn) from phosphatidylserine (PtdSer). In Acinetobacter baumannii (strain ATCC 17978 / DSM 105126 / CIP 53.77 / LMG 1025 / NCDC KC755 / 5377), this protein is Phosphatidylserine decarboxylase proenzyme.